Here is a 326-residue protein sequence, read N- to C-terminus: Probable cell division protein WhiA (326 aa).

The H-T-H motif DNA-binding region spans S275 to A308.

It belongs to the WhiA family.

Its function is as follows. Involved in cell division and chromosome segregation. This chain is Probable cell division protein WhiA, found in Thermobifida fusca (strain YX).